A 66-amino-acid polypeptide reads, in one-letter code: Brevinin-1CDYd (66 aa).

A signal peptide spans 1-22 (MFTLKKSLLILFFLGTINFSLC). Residues 23–44 (EEERNAEEERRDDPEERDVEVE) constitute a propeptide that is removed on maturation. An intrachain disulfide couples Cys-60 to Cys-66.

It belongs to the frog skin active peptide (FSAP) family. Brevinin subfamily. Expressed by the skin glands.

It is found in the secreted. Antimicrobial peptide. The protein is Brevinin-1CDYd of Rana dybowskii (Dybovsky's frog).